Here is a 148-residue protein sequence, read N- to C-terminus: Large ribosomal subunit protein uL15 (148 aa).

The disordered stretch occupies residues 1–46; it reads MITIEDLKPTPGSNKKYKRLGRGQGSGKGKTAGKGHKGQKSRGTGK. A compositionally biased stretch (basic residues) spans 31 to 45; that stretch reads TAGKGHKGQKSRGTG.

The protein belongs to the universal ribosomal protein uL15 family. As to quaternary structure, part of the 50S ribosomal subunit.

In terms of biological role, binds to the 23S rRNA. This chain is Large ribosomal subunit protein uL15, found in Fervidobacterium nodosum (strain ATCC 35602 / DSM 5306 / Rt17-B1).